The primary structure comprises 71 residues: MKEFLTAATSSTGGASLVGAATGQLYIAGATFICFLLFGAWGAYWKYRDSKAIQEALNDGDLNKALKIRGR.

Residues 1 to 24 (MKEFLTAATSSTGGASLVGAATGQ) lie on the Cytoplasmic side of the membrane. A helical; Signal-anchor for type II membrane protein membrane pass occupies residues 25–45 (LYIAGATFICFLLFGAWGAYW). Residues 46-71 (KYRDSKAIQEALNDGDLNKALKIRGR) are Periplasmic-facing.

In terms of assembly, homomultimer.

It is found in the host cell inner membrane. In terms of biological role, accumulates harmlessly in the cytoplasmic membrane until it reaches a critical concentration that triggers the formation of nanometer-scale pores (pinholes) causing host cell membrane depolarization and endolysin refolding and release into the periplasmic space. Once the pinholin has permeabilized the host cell membrane, the SAR-endolysin is released into the periplasm and breaks down the peptidoglycan layer. Determines the precise timing of host cell lysis. Participates with the SAR-endolysin and the U-spanin protein in the sequential events which lead to the programmed host cell lysis releasing the mature viral particles from the host cell. This is Holin from Escherichia coli (Bacteriophage T1).